A 228-amino-acid polypeptide reads, in one-letter code: ATP-dependent dethiobiotin synthetase BioD (228 aa).

12 to 17 lines the ATP pocket; that stretch reads EIGKTT. Position 16 (T16) interacts with Mg(2+). Residue K37 is part of the active site. Substrate is bound at residue S41. ATP contacts are provided by residues D54, 116–119, and 205–207; these read EGAG and PRL. Residues D54 and E116 each contribute to the Mg(2+) site.

It belongs to the dethiobiotin synthetase family. Homodimer. Mg(2+) serves as cofactor.

The protein localises to the cytoplasm. The catalysed reaction is (7R,8S)-7,8-diammoniononanoate + CO2 + ATP = (4R,5S)-dethiobiotin + ADP + phosphate + 3 H(+). It functions in the pathway cofactor biosynthesis; biotin biosynthesis; biotin from 7,8-diaminononanoate: step 1/2. Catalyzes a mechanistically unusual reaction, the ATP-dependent insertion of CO2 between the N7 and N8 nitrogen atoms of 7,8-diaminopelargonic acid (DAPA, also called 7,8-diammoniononanoate) to form a ureido ring. This Pseudomonas aeruginosa (strain LESB58) protein is ATP-dependent dethiobiotin synthetase BioD.